Consider the following 435-residue polypeptide: ATP-dependent RNA helicase RhlB (435 aa).

The Q motif motif lies at 9–37 (QKFADLGLNPQVVEGLEKKGFEFCTPIQA). One can recognise a Helicase ATP-binding domain in the interval 40–219 (LPVLLSGQDI…FEHMHNPEHV (180 aa)). 53-60 (AQTGTGKT) lines the ATP pocket. Residues 165-168 (DEAD) carry the DEAD box motif. Positions 245-390 (ALLQTLIEEE…VSDYDSSALI (146 aa)) constitute a Helicase C-terminal domain. A disordered region spans residues 395–435 (APVRTPSARNQQRRTNTGGARSGDRKSNNRRPRQPRQHKEA). A compositionally biased stretch (polar residues) spans 401-413 (SARNQQRRTNTGG). A compositionally biased stretch (basic residues) spans 422 to 435 (NNRRPRQPRQHKEA).

Belongs to the DEAD box helicase family. RhlB subfamily. Component of the RNA degradosome, which is a multiprotein complex involved in RNA processing and mRNA degradation.

The protein localises to the cytoplasm. The catalysed reaction is ATP + H2O = ADP + phosphate + H(+). Functionally, DEAD-box RNA helicase involved in RNA degradation. Has RNA-dependent ATPase activity and unwinds double-stranded RNA. The polypeptide is ATP-dependent RNA helicase RhlB (Vibrio vulnificus (strain CMCP6)).